We begin with the raw amino-acid sequence, 215 residues long: Ribonuclease T (215 aa).

One can recognise an Exonuclease domain in the interval 20-194 (VVIDVETAGF…YDTERTAVLF (175 aa)). Mg(2+) is bound by residues D23, E25, H181, and D186. H181 (proton donor/acceptor) is an active-site residue.

The protein belongs to the RNase T family. In terms of assembly, homodimer. Mg(2+) serves as cofactor.

Functionally, trims short 3' overhangs of a variety of RNA species, leaving a one or two nucleotide 3' overhang. Responsible for the end-turnover of tRNA: specifically removes the terminal AMP residue from uncharged tRNA (tRNA-C-C-A). Also appears to be involved in tRNA biosynthesis. The chain is Ribonuclease T from Shigella boydii serotype 4 (strain Sb227).